Reading from the N-terminus, the 345-residue chain is UDP-3-O-acylglucosamine N-acyltransferase (345 aa).

H241 (proton acceptor) is an active-site residue.

It belongs to the transferase hexapeptide repeat family. LpxD subfamily. In terms of assembly, homotrimer.

It carries out the reaction a UDP-3-O-[(3R)-3-hydroxyacyl]-alpha-D-glucosamine + a (3R)-hydroxyacyl-[ACP] = a UDP-2-N,3-O-bis[(3R)-3-hydroxyacyl]-alpha-D-glucosamine + holo-[ACP] + H(+). The protein operates within bacterial outer membrane biogenesis; LPS lipid A biosynthesis. Functionally, catalyzes the N-acylation of UDP-3-O-acylglucosamine using 3-hydroxyacyl-ACP as the acyl donor. Is involved in the biosynthesis of lipid A, a phosphorylated glycolipid that anchors the lipopolysaccharide to the outer membrane of the cell. In Desulfotalea psychrophila (strain LSv54 / DSM 12343), this protein is UDP-3-O-acylglucosamine N-acyltransferase.